The sequence spans 399 residues: Tryptophan synthase beta chain (399 aa).

Lys-92 bears the N6-(pyridoxal phosphate)lysine mark.

This sequence belongs to the TrpB family. As to quaternary structure, tetramer of two alpha and two beta chains. Pyridoxal 5'-phosphate is required as a cofactor.

It carries out the reaction (1S,2R)-1-C-(indol-3-yl)glycerol 3-phosphate + L-serine = D-glyceraldehyde 3-phosphate + L-tryptophan + H2O. It participates in amino-acid biosynthesis; L-tryptophan biosynthesis; L-tryptophan from chorismate: step 5/5. Functionally, the beta subunit is responsible for the synthesis of L-tryptophan from indole and L-serine. This is Tryptophan synthase beta chain from Acidithiobacillus ferrooxidans (strain ATCC 23270 / DSM 14882 / CIP 104768 / NCIMB 8455) (Ferrobacillus ferrooxidans (strain ATCC 23270)).